The chain runs to 714 residues: Hormonally up-regulated neu tumor-associated kinase (714 aa).

Low complexity predominate over residues 1-15 (MPAAAGDGLLGEPAA). Residues 1–26 (MPAAAGDGLLGEPAAPGGGGGAEDAA) are disordered. A Protein kinase domain is found at 62 to 320 (LIGSRKLGEG…IQQALANRWL (259 aa)). Residues 68-76 (LGEGSFAKV) and Lys91 contribute to the ATP site. Asp186 acts as the Proton acceptor in catalysis. The span at 437–461 (KKPKEQEKRGDFLHRPFSKKLDKNL) shows a compositional bias: basic and acidic residues. 3 disordered regions span residues 437 to 471 (KKPK…SGSL), 518 to 552 (MEFI…HKED), and 590 to 615 (ARRN…HTPL). The span at 599-611 (LSPGLPSGSMSPL) shows a compositional bias: low complexity.

The protein belongs to the protein kinase superfamily. CAMK Ser/Thr protein kinase family. SNF1 subfamily.

It catalyses the reaction L-seryl-[protein] + ATP = O-phospho-L-seryl-[protein] + ADP + H(+). The catalysed reaction is L-threonyl-[protein] + ATP = O-phospho-L-threonyl-[protein] + ADP + H(+). The chain is Hormonally up-regulated neu tumor-associated kinase (HUNK) from Homo sapiens (Human).